The primary structure comprises 529 residues: NADPH-dependent thioredoxin reductase 3 (529 aa).

Residues 1 to 67 (MAASPKIGIG…SSDSLRLRVS (67 aa)) constitute a chloroplast transit peptide. The segment at 54–78 (TRTRSSDSLRLRVSATANSPSSSSS) is disordered. Over residues 64–78 (LRVSATANSPSSSSS) the composition is skewed to low complexity. Residues 91 to 94 (SGPA), 113 to 120 (EGYQMGGV), Asn-133, Val-166, and Cys-220 contribute to the FAD site. Cys-217 and Cys-220 are disulfide-bonded. The NADP(+) site is built by Thr-240, Arg-265, Ile-324, and Tyr-344. FAD contacts are provided by residues Asp-364 and 371–374 (RQAV). Arg-371 contributes to the NADP(+) binding site. One can recognise a Thioredoxin domain in the interval 403 to 529 (PQTEEAKKEF…EYREFIEANK (127 aa)). Residues Cys-454 and Cys-457 each act as nucleophile in the active site. Residues Cys-454 and Cys-457 are joined by a disulfide bond.

Belongs to the class-II pyridine nucleotide-disulfide oxidoreductase family. May homodimerize. Interacts with the 2-Cys peroxiredoxin BAS1. Requires FAD as cofactor.

It localises to the plastid. It is found in the chloroplast. It catalyses the reaction [thioredoxin]-dithiol + NADP(+) = [thioredoxin]-disulfide + NADPH + H(+). Functionally, thioredoxin reductase (TR) that exhibits both TR and thioredoxin (Trx) activities. Contains a C-terminal functional Trx domain. Functions as an electron donor for plastidial 2-Cys peroxiredoxins and participates in a NADPH-dependent hydrogen peroxide scavenging system in chloroplasts in the dark. Required for chlorophyll biosynthesis and biogenesis of the photosynthetic apparatus. Activates aerobic cyclase which converts Mg-protoporhyrin monomethyl ester into protochlorophyllide. Involved in a light-dependent regulation of starch biosynthesis by redox activation of the ADP-glucose pyrophosphorylase (AGPase), a central enzyme of starch synthesis. This is NADPH-dependent thioredoxin reductase 3 from Arabidopsis thaliana (Mouse-ear cress).